Consider the following 88-residue polypeptide: Small ribosomal subunit protein uS15 (88 aa).

Belongs to the universal ribosomal protein uS15 family. In terms of assembly, part of the 30S ribosomal subunit. Forms a bridge to the 50S subunit in the 70S ribosome, contacting the 23S rRNA.

Functionally, one of the primary rRNA binding proteins, it binds directly to 16S rRNA where it helps nucleate assembly of the platform of the 30S subunit by binding and bridging several RNA helices of the 16S rRNA. Its function is as follows. Forms an intersubunit bridge (bridge B4) with the 23S rRNA of the 50S subunit in the ribosome. The sequence is that of Small ribosomal subunit protein uS15 from Caldicellulosiruptor saccharolyticus (strain ATCC 43494 / DSM 8903 / Tp8T 6331).